The primary structure comprises 147 residues: Hemoglobin subunit delta (147 aa).

Residues 3 to 147 (HLTPEEKALV…VANALAHKYH (145 aa)) enclose the Globin domain. Ser51 carries the post-translational modification Phosphoserine. Residues His64 and His93 each coordinate heme b.

Belongs to the globin family. Heterotetramer of two delta chains and two alpha chains. As to expression, red blood cells.

The polypeptide is Hemoglobin subunit delta (HBD) (Trichechus manatus (Caribbean manatee)).